The sequence spans 125 residues: Small ribosomal subunit protein uS13 (125 aa).

It belongs to the universal ribosomal protein uS13 family. In terms of assembly, part of the 30S ribosomal subunit. Forms a loose heterodimer with protein S19. Forms two bridges to the 50S subunit in the 70S ribosome.

In terms of biological role, located at the top of the head of the 30S subunit, it contacts several helices of the 16S rRNA. In the 70S ribosome it contacts the 23S rRNA (bridge B1a) and protein L5 of the 50S subunit (bridge B1b), connecting the 2 subunits; these bridges are implicated in subunit movement. Contacts the tRNAs in the A and P-sites. The sequence is that of Small ribosomal subunit protein uS13 from Rickettsia prowazekii (strain Madrid E).